We begin with the raw amino-acid sequence, 104 residues long: Gastrin (104 aa).

Residues Met-1–Ala-21 form the signal peptide. A propeptide spanning residues Ser-22 to Arg-58 is cleaved from the precursor. A disordered region spans residues Phe-27–His-67. A compositionally biased stretch (basic and acidic residues) spans Arg-40–Arg-49. Gln-59 bears the Pyrrolidone carboxylic acid; in form big gastrin mark. Gln-76 is modified (pyrrolidone carboxylic acid; in form gastrin). Tyr-87 bears the Sulfotyrosine; partial mark. Phe-92 is modified (phenylalanine amide). A Phosphoserine modification is found at Ser-96. The propeptide occupies Ser-96–Pro-104.

It belongs to the gastrin/cholecystokinin family. In terms of processing, sulfation enhances proteolytic processing, and blocks peptide degradation. Levels of sulfation differ between proteolytically-cleaved gastrins. Thus, gastrin-6 is almost 73% sulfated, whereas the larger gastrins are less than 50% sulfated. Sulfation levels are also tissue-specific.

It is found in the secreted. Gastrin stimulates the stomach mucosa to produce and secrete hydrochloric acid and the pancreas to secrete its digestive enzymes. It also stimulates smooth muscle contraction and increases blood circulation and water secretion in the stomach and intestine. The polypeptide is Gastrin (GAST) (Sus scrofa (Pig)).